Consider the following 228-residue polypeptide: Histidine/lysine/arginine/ornithine transport system permease protein HisQ (228 aa).

The Periplasmic portion of the chain corresponds to 1 to 12; that stretch reads MLYGFSGVILQG. The helical transmembrane segment at 13-33 threads the bilayer; it reads AIVTLELALSSVVLAVLIGLV. Residues 13-212 enclose the ABC transmembrane type-1 domain; sequence AIVTLELALS…VFTTVSNGVL (200 aa). The Cytoplasmic segment spans residues 34-58; the sequence is GAGAKLSQNRVTGLIFEGYTTLIRG. Residues 59-79 form a helical membrane-spanning segment; the sequence is VPDLVLMLLIFYGLQIALNVV. The Periplasmic segment spans residues 80–87; it reads TDSLGIDQ. The chain crosses the membrane as a helical span at residues 88–108; sequence IDIDPMVAGIITLGFIYGAYF. The Cytoplasmic portion of the chain corresponds to 109–152; that stretch reads TETFRGAFMAVPKGHIEAATAFGFTHGQTFRRIMFPAMMRYALP. Residues 153-173 traverse the membrane as a helical segment; sequence GIGNNWQVILKATALVSLLGL. Residues 174–194 are Periplasmic-facing; it reads EDVVKATQLAGKSTWEPFYFA. Residues 195-215 traverse the membrane as a helical segment; that stretch reads VVCGLIYLVFTTVSNGVLLLL. At 216–228 the chain is on the cytoplasmic side; sequence ERRYSVGVKRADL.

Belongs to the binding-protein-dependent transport system permease family. HisMQ subfamily. In terms of assembly, the HisPMQJ complex is composed of two ATP-binding proteins (HisP), two transmembrane proteins (HisM and HisQ) and a solute-binding protein (HisJ). The HisPMQ-ArgT complex is composed of two ATP-binding proteins (HisP), two transmembrane proteins (HisM and HisQ) and a solute-binding protein (ArgT).

It localises to the cell inner membrane. In terms of biological role, part of the ABC transporter complex HisPMQJ involved in histidine transport. Is also part of the ABC transporter complex HisPMQ-ArgT involved in lysine/arginine/ornithine transport. Probably responsible for the translocation of the substrate across the membrane. The polypeptide is Histidine/lysine/arginine/ornithine transport system permease protein HisQ (hisQ) (Salmonella typhi).